A 178-amino-acid chain; its full sequence is MEQYHGTTIVSVRRGNQVALGGDGQVTLGNIVMKGTARKVRRIYNGKVLVGFAGSTADAFSLLDRFEAKLEKYQGNLTRAAVDLAKDWRSDRALRRLEAMLITADRDTTLVITGNGDVLDPEGGIAAIGSGGAYAQSAAKALMENTEMAPKDVVEKALTIAGELCIYTNTNFVIETLE.

Threonine 7 is a catalytic residue. Residues glycine 162, cysteine 165, and threonine 168 each contribute to the Na(+) site.

This sequence belongs to the peptidase T1B family. HslV subfamily. As to quaternary structure, a double ring-shaped homohexamer of HslV is capped on each side by a ring-shaped HslU homohexamer. The assembly of the HslU/HslV complex is dependent on binding of ATP.

The protein resides in the cytoplasm. The catalysed reaction is ATP-dependent cleavage of peptide bonds with broad specificity.. Its activity is regulated as follows. Allosterically activated by HslU binding. Functionally, protease subunit of a proteasome-like degradation complex believed to be a general protein degrading machinery. This is ATP-dependent protease subunit HslV from Cupriavidus taiwanensis (strain DSM 17343 / BCRC 17206 / CCUG 44338 / CIP 107171 / LMG 19424 / R1) (Ralstonia taiwanensis (strain LMG 19424)).